Consider the following 485-residue polypeptide: Noelin (485 aa).

The first 16 residues, methionine 1–alanine 16, serve as a signal peptide directing secretion. N-linked (GlcNAc...) asparagine glycans are attached at residues asparagine 33, asparagine 103, asparagine 187, asparagine 288, asparagine 307, asparagine 394, asparagine 431, and asparagine 473. Residues arginine 87–leucine 225 are a coiled coil. The 253-residue stretch at alanine 226–histidine 478 folds into the Olfactomedin-like domain. Residues cysteine 227 and cysteine 409 are joined by a disulfide bond.

Homotetramer; disulfide-linked. Dimer of dimers, giving rise to a V-shaped homotretramer. Isoform 1 and isoform 3 interact with RTN4R. Identified in a complex with RTN4R and LINGO1. Peripherally associated with AMPAR complex. AMPAR complex consists of an inner core made of 4 pore-forming GluA/GRIA proteins (GRIA1, GRIA2, GRIA3 and GRIA4) and 4 major auxiliary subunits arranged in a twofold symmetry. One of the two pairs of distinct binding sites is occupied either by CNIH2, CNIH3 or CACNG2, CACNG3. The other harbors CACNG2, CACNG3, CACNG4, CACNG8 or GSG1L. This inner core of AMPAR complex is complemented by outer core constituents binding directly to the GluA/GRIA proteins at sites distinct from the interaction sites of the inner core constituents. Outer core constituents include at least PRRT1, PRRT2, CKAMP44/SHISA9, FRRS1L and NRN1. The proteins of the inner and outer core serve as a platform for other, more peripherally associated AMPAR constituents, including OLFM1. Alone or in combination, these auxiliary subunits control the gating and pharmacology of the AMPAR complex and profoundly impact their biogenesis and protein processing. Interacts with OLFM2.

The protein localises to the secreted. It is found in the synapse. The protein resides in the endoplasmic reticulum. Its subcellular location is the cell projection. It localises to the axon. The protein localises to the perikaryon. In terms of biological role, contributes to the regulation of axonal growth in the embryonic and adult central nervous system by inhibiting interactions between RTN4R and LINGO1. Inhibits RTN4R-mediated axon growth cone collapse. May play an important role in regulating the production of neural crest cells by the neural tube. May be required for normal responses to olfactory stimuli. In Homo sapiens (Human), this protein is Noelin (OLFM1).